Consider the following 155-residue polypeptide: Endoribonuclease YbeY (155 aa).

The Zn(2+) site is built by histidine 114, histidine 118, and histidine 124.

It belongs to the endoribonuclease YbeY family. Zn(2+) is required as a cofactor.

It localises to the cytoplasm. Its function is as follows. Single strand-specific metallo-endoribonuclease involved in late-stage 70S ribosome quality control and in maturation of the 3' terminus of the 16S rRNA. This is Endoribonuclease YbeY from Escherichia coli O81 (strain ED1a).